The sequence spans 77 residues: Acyl carrier protein (77 aa).

One can recognise a Carrier domain in the interval 2 to 77 (SDIAARVKKI…DATKFISEAQ (76 aa)). Ser-37 is subject to O-(pantetheine 4'-phosphoryl)serine.

The protein belongs to the acyl carrier protein (ACP) family. Post-translationally, 4'-phosphopantetheine is transferred from CoA to a specific serine of apo-ACP by AcpS. This modification is essential for activity because fatty acids are bound in thioester linkage to the sulfhydryl of the prosthetic group.

The protein localises to the cytoplasm. Its pathway is lipid metabolism; fatty acid biosynthesis. Its function is as follows. Carrier of the growing fatty acid chain in fatty acid biosynthesis. This is Acyl carrier protein from Jannaschia sp. (strain CCS1).